We begin with the raw amino-acid sequence, 142 residues long: uncharacterized protein (142 aa).

The N-acetyltransferase domain maps to 1-120; the sequence is MADKFDANDE…TILKWEKNMD (120 aa).

It belongs to the acetyltransferase family.

This is an uncharacterized protein from Streptococcus pyogenes serotype M3 (strain ATCC BAA-595 / MGAS315).